Consider the following 525-residue polypeptide: GMP synthase [glutamine-hydrolyzing] (525 aa).

The Glutamine amidotransferase type-1 domain maps to 16-205 (PVLVVDFGAQ…LHDFAGLGAQ (190 aa)). The active-site Nucleophile is the Cys-93. Catalysis depends on residues His-179 and Glu-181. Positions 206–399 (WTPANIANAL…LGLPEEIVAR (194 aa)) constitute a GMPS ATP-PPase domain. 233–239 (SGGVDSA) serves as a coordination point for ATP.

In terms of assembly, homodimer.

It catalyses the reaction XMP + L-glutamine + ATP + H2O = GMP + L-glutamate + AMP + diphosphate + 2 H(+). It functions in the pathway purine metabolism; GMP biosynthesis; GMP from XMP (L-Gln route): step 1/1. In terms of biological role, catalyzes the synthesis of GMP from XMP. This Mycobacterium tuberculosis (strain CDC 1551 / Oshkosh) protein is GMP synthase [glutamine-hydrolyzing] (guaA).